Reading from the N-terminus, the 384-residue chain is 8-amino-7-oxononanoate synthase (384 aa).

Arg21 lines the substrate pocket. 108–109 serves as a coordination point for pyridoxal 5'-phosphate; sequence GF. Position 133 (His133) interacts with substrate. Residues Ser179, His207, and Thr233 each contribute to the pyridoxal 5'-phosphate site. Lys236 is modified (N6-(pyridoxal phosphate)lysine). Thr350 contacts substrate.

Belongs to the class-II pyridoxal-phosphate-dependent aminotransferase family. BioF subfamily. Homodimer. Requires pyridoxal 5'-phosphate as cofactor.

The catalysed reaction is 6-carboxyhexanoyl-[ACP] + L-alanine + H(+) = (8S)-8-amino-7-oxononanoate + holo-[ACP] + CO2. Its pathway is cofactor biosynthesis; biotin biosynthesis. Catalyzes the decarboxylative condensation of pimeloyl-[acyl-carrier protein] and L-alanine to produce 8-amino-7-oxononanoate (AON), [acyl-carrier protein], and carbon dioxide. This is 8-amino-7-oxononanoate synthase from Erwinia tasmaniensis (strain DSM 17950 / CFBP 7177 / CIP 109463 / NCPPB 4357 / Et1/99).